The sequence spans 118 residues: Large ribosomal subunit protein bL20 (118 aa).

It belongs to the bacterial ribosomal protein bL20 family.

Binds directly to 23S ribosomal RNA and is necessary for the in vitro assembly process of the 50S ribosomal subunit. It is not involved in the protein synthesizing functions of that subunit. The polypeptide is Large ribosomal subunit protein bL20 (Hahella chejuensis (strain KCTC 2396)).